An 800-amino-acid chain; its full sequence is Nucleolar complex protein 3 homolog (800 aa).

2 stretches are compositionally biased toward basic residues: residues 1 to 19 and 42 to 53; these read MGPASKRNKKKRPSFRKLL and KKQRKEQRKLHK. Disordered regions lie at residues 1-91 and 167-197; these read MGPA…TDMM and KPVLPQAEEEEEEPNQEVYLQKEEEPESAPL. The span at 65–74 shows a compositional bias: basic and acidic residues; the sequence is PLERYKKRPE. The stretch at 449–490 forms a coiled coil; that stretch reads SFKEKRKNLSRMQRKWKKAEEKLQKELLEAEATESKEKKIKL. A disordered region spans residues 780–800; it reads LQEEPEQMSLDFTSPHTQQEP. A compositionally biased stretch (polar residues) spans 789 to 800; it reads LDFTSPHTQQEP.

Belongs to the CBF/MAK21 family.

The protein localises to the nucleus. The protein resides in the nucleolus. The polypeptide is Nucleolar complex protein 3 homolog (noc3l) (Danio rerio (Zebrafish)).